Consider the following 206-residue polypeptide: Probable GTP-binding protein EngB (206 aa).

The EngB-type G domain maps to 23 to 197 (QGIEVAFAGR…ERVLDKWFGY (175 aa)). GTP-binding positions include 31 to 38 (GRSNAGKS), 58 to 62 (GRTQL), 76 to 79 (DLPG), 143 to 146 (TKAD), and 176 to 178 (FSS). Mg(2+) contacts are provided by S38 and T60.

This sequence belongs to the TRAFAC class TrmE-Era-EngA-EngB-Septin-like GTPase superfamily. EngB GTPase family. Mg(2+) is required as a cofactor.

Functionally, necessary for normal cell division and for the maintenance of normal septation. This Pseudoalteromonas atlantica (strain T6c / ATCC BAA-1087) protein is Probable GTP-binding protein EngB.